The chain runs to 155 residues: RNA-binding protein 3 (155 aa).

The 79-residue stretch at 6–84 folds into the RRM domain; that stretch reads GKLFVGGLNF…RQIRVDHAGK (79 aa). R47 is modified (omega-N-methylarginine). The segment at 79-155 is disordered; the sequence is VDHAGKSARG…GGNYRDNYDN (77 aa). R105 is subject to Asymmetric dimethylarginine; alternate. R105 carries the dimethylated arginine; alternate modification. R105 carries the post-translational modification Omega-N-methylarginine; alternate. Positions 105–114 are enriched in gly residues; the sequence is RGGGDQGYGS. Residues R120 and R130 each carry the omega-N-methylarginine modification. 2 positions are modified to phosphoserine: S135 and S145. Y153 carries the phosphotyrosine modification.

As to quaternary structure, interacts with RPL4. Associates with the 60S ribosomal subunits. In terms of processing, arg-105 is dimethylated, probably to asymmetric dimethylarginine. Phosphorylated. Isoform 2 is methylated. In terms of tissue distribution, widely expressed in the brain. Highly expressed in the cerebellum and olfactory bulb (at protein level). Expressed in neurons and glial cells.

Its subcellular location is the nucleus. It is found in the cytoplasm. The protein localises to the cell projection. The protein resides in the dendrite. Cold-inducible mRNA binding protein that enhances global protein synthesis at both physiological and mild hypothermic temperatures. Reduces the relative abundance of microRNAs, when overexpressed. Enhances phosphorylation of translation initiation factors and active polysome formation. The protein is RNA-binding protein 3 (Rbm3) of Rattus norvegicus (Rat).